The sequence spans 708 residues: Transcriptional regulator nsrM (708 aa).

A DNA-binding region (zn(2)-C6 fungal-type) is located at residues 37–63 (CVRCQQRKVRCDHKSPCGNCVASDSQC).

The protein resides in the nucleus. Functionally, transcriptional regulator; part of the gene cluster that mediates the biosynthesis of the tetrahydroxanthone dimer neosartorin, which exhibits antibacterial activity. In Aspergillus novofumigatus (strain IBT 16806), this protein is Transcriptional regulator nsrM.